We begin with the raw amino-acid sequence, 711 residues long: Ribosomal RNA large subunit methyltransferase K/L (711 aa).

Residues 43-154 (LGYRITLWSR…RGQITIGLNF (112 aa)) enclose the THUMP domain.

This sequence belongs to the methyltransferase superfamily. RlmKL family.

It localises to the cytoplasm. It carries out the reaction guanosine(2445) in 23S rRNA + S-adenosyl-L-methionine = N(2)-methylguanosine(2445) in 23S rRNA + S-adenosyl-L-homocysteine + H(+). The catalysed reaction is guanosine(2069) in 23S rRNA + S-adenosyl-L-methionine = N(2)-methylguanosine(2069) in 23S rRNA + S-adenosyl-L-homocysteine + H(+). Functionally, specifically methylates the guanine in position 2445 (m2G2445) and the guanine in position 2069 (m7G2069) of 23S rRNA. The sequence is that of Ribosomal RNA large subunit methyltransferase K/L from Shewanella woodyi (strain ATCC 51908 / MS32).